The primary structure comprises 166 residues: Putative peroxisomal peroxiredoxin (166 aa).

The Thioredoxin domain maps to 5 to 166; that stretch reads FPEDVKFLYI…SGVDAVLAAL (162 aa). The active-site Cysteine sulfenic acid (-SOH) intermediate is Cys56.

Belongs to the peroxiredoxin family. Prx5 subfamily. Homodimer; disulfide-linked, upon oxidation.

The enzyme catalyses a hydroperoxide + [protein]-dithiol = [protein]-disulfide + an alcohol + H2O. Thiol-specific peroxidase that catalyzes the reduction of hydrogen peroxide and organic hydroperoxides to water and alcohols, respectively. Plays a role in cell protection against oxidative stress by detoxifying peroxides and as sensor of hydrogen peroxide-mediated signaling events. This is Putative peroxisomal peroxiredoxin from Lipomyces kononenkoae (Yeast).